A 243-amino-acid chain; its full sequence is Pyridoxine 5'-phosphate synthase (243 aa).

N9 contributes to the 3-amino-2-oxopropyl phosphate binding site. 11–12 is a 1-deoxy-D-xylulose 5-phosphate binding site; sequence DH. R20 is a 3-amino-2-oxopropyl phosphate binding site. The active-site Proton acceptor is H45. R47 and H52 together coordinate 1-deoxy-D-xylulose 5-phosphate. E72 (proton acceptor) is an active-site residue. Position 102 (T102) interacts with 1-deoxy-D-xylulose 5-phosphate. The active-site Proton donor is H193. Residues G194 and 215–216 each bind 3-amino-2-oxopropyl phosphate; that span reads GH.

It belongs to the PNP synthase family. Homooctamer; tetramer of dimers.

The protein resides in the cytoplasm. The enzyme catalyses 3-amino-2-oxopropyl phosphate + 1-deoxy-D-xylulose 5-phosphate = pyridoxine 5'-phosphate + phosphate + 2 H2O + H(+). Its pathway is cofactor biosynthesis; pyridoxine 5'-phosphate biosynthesis; pyridoxine 5'-phosphate from D-erythrose 4-phosphate: step 5/5. Functionally, catalyzes the complicated ring closure reaction between the two acyclic compounds 1-deoxy-D-xylulose-5-phosphate (DXP) and 3-amino-2-oxopropyl phosphate (1-amino-acetone-3-phosphate or AAP) to form pyridoxine 5'-phosphate (PNP) and inorganic phosphate. In Salmonella paratyphi A (strain ATCC 9150 / SARB42), this protein is Pyridoxine 5'-phosphate synthase.